The following is a 373-amino-acid chain: Zinc finger protein CONSTANS (373 aa).

The B box-type 1; atypical zinc finger occupies 15 to 57 (NRARPCDTCRSNACTVYCHADSAYLCMSCDAQVHSANRVASRH). Zn(2+) contacts are provided by C20, C23, C43, H48, C63, C66, C86, and H91. The B box-type 2; atypical zinc finger occupies 58–108 (KRVRVCESCERAPAAFLCEADDASLCTACDSEVHSANPLARRHQRVPILPI). Over residues 109-120 (SGNSFSSMTTTH) the composition is skewed to polar residues. The tract at residues 109 to 130 (SGNSFSSMTTTHHQSEKTMTDP) is disordered. Residues 121–130 (HQSEKTMTDP) show a composition bias toward basic and acidic residues. The CCT domain maps to 306–348 (REARVLRYREKRKTRKFEKTIRYASRKAYAEIRPRVNGRFAKR).

The protein belongs to the CONSTANS family. As to quaternary structure, interacts with ADO3, SPA1, SPA2, SPA3 and SPA4. Interacts with MRG1 and MRG2 (via MRG domain). Interacts (via B-box) with MIP1A. Interacts with AS1 to form a functional complex regulating FT expression. Interacts with NFYC9. Component of a red light-dependent nuclear complex made of PHL, PHYB and CO. Interacts directly with PHL in the presence of PHYB. As to expression, expressed in leaves, shoots and shoot apical meristem. Detected in the vascular tissue of the hypocotyl, the cotyledons and the leaves. Restricted to the protoxylem and phloem in young inflorescence stems and to the phloem only in older inflorescences. Also detected in the vascular tissue of the root.

The protein resides in the nucleus. Its function is as follows. Transcription factor that acts in the long day flowering pathway and may mediate between the circadian clock and the control of flowering. Plays a role in the regulation of flowering time by acting on 'SUPPRESSOR OF OVEREXPRESSION OF CO1', 'TERMINAL FLOWER 1' and 'FLOWERING LOCUS T'. Also regulates P5CS2 and ACS10 (involved in proline and ethylene biosynthesis, respectively). Regulates the expression of NAKR1 by binding to the 5'-TGTG(N2-3)ATG-3' motif. The chain is Zinc finger protein CONSTANS from Arabidopsis thaliana (Mouse-ear cress).